Consider the following 126-residue polypeptide: Glycine cleavage system H protein (126 aa).

One can recognise a Lipoyl-binding domain in the interval V22–S104. K63 is subject to N6-lipoyllysine.

It belongs to the GcvH family. In terms of assembly, the glycine cleavage system is composed of four proteins: P, T, L and H. The cofactor is (R)-lipoate.

Functionally, the glycine cleavage system catalyzes the degradation of glycine. The H protein shuttles the methylamine group of glycine from the P protein to the T protein. This is Glycine cleavage system H protein from Parabacteroides distasonis (strain ATCC 8503 / DSM 20701 / CIP 104284 / JCM 5825 / NCTC 11152).